The sequence spans 204 residues: Proteasome subunit beta type-3 (204 aa).

It belongs to the peptidase T1B family. As to quaternary structure, the 26S proteasome consists of a 20S proteasome core and two 19S regulatory subunits. The 20S proteasome core is composed of 28 subunits that are arranged in four stacked rings, resulting in a barrel-shaped structure. The two end rings are each formed by seven alpha subunits, and the two central rings are each formed by seven beta subunits. The catalytic chamber with the active sites is on the inside of the barrel.

Its subcellular location is the cytoplasm. The protein resides in the nucleus. In terms of biological role, non-catalytic component of the proteasome, a multicatalytic proteinase complex which is characterized by its ability to cleave peptides with Arg, Phe, Tyr, Leu, and Glu adjacent to the leaving group at neutral or slightly basic pH. The proteasome has an ATP-dependent proteolytic activity. This is Proteasome subunit beta type-3 (pbs-3) from Caenorhabditis elegans.